The chain runs to 268 residues: Magnesium dechelatase SGR1, chloroplastic (268 aa).

Residues 1–48 constitute a chloroplast transit peptide; it reads MCSLSAIMLLPTKLKPAYSDKRSNSSSSSSLFFNNRRSKKKNQSIVPV.

Belongs to the staygreen family. In terms of assembly, interacts with HCAR, the chlorophyll catabolic enzymes (CCEs) NYC1, PAO and RCCR, and the LHCII complex. Part of a SGR1-CCE-LHCII complex, which acts in chlorophyll breakdown. In terms of tissue distribution, expressed in roots, leaves, seeds, flowers, buds, petals, sepals and siliques.

The protein localises to the plastid. The protein resides in the chloroplast thylakoid membrane. The catalysed reaction is chlorophyll a + 2 H(+) = pheophytin a + Mg(2+). Its function is as follows. Magnesium chelatase involved in chlorophyll a degradation in the chlorophyll-protein complexes of photosystem I (PSI) and photosystem II (PSII). Contributes to the degradation of PSI and PSII in the thylakoid membranes. Required to trigger chlorophyll degradation during natural and dark-induced leaf senescence. Mediates chlorophyll degradation during embryo degreening. Recombinant SGR1 possesses high dechelating activity against chlorophyll a, very low activity against chlorophyllide a, and no activity against chlorophyll b. Magnesium dechelation of chlorophyll a by SGR1 activates chlorophyll b degradation by inducing the expression of NYC1, an enzyme involved in chlorophyll b degradation. This chain is Magnesium dechelatase SGR1, chloroplastic, found in Arabidopsis thaliana (Mouse-ear cress).